Here is a 197-residue protein sequence, read N- to C-terminus: uncharacterized protein (197 aa).

Residues 168-185 (QRDDFSEDSHANDPKLVG) are compositionally biased toward basic and acidic residues. Residues 168 to 197 (QRDDFSEDSHANDPKLVGDDYVPQAPEQIN) form a disordered region.

This is an uncharacterized protein from Escherichia coli (strain K12).